Here is a 331-residue protein sequence, read N- to C-terminus: NmrA-like family domain-containing oxidoreductase himF (331 aa).

NADP(+)-binding positions include 8 to 13 (GATGNQ), 34 to 38 (RNAES), 55 to 56 (DG), 76 to 78 (TNG), Lys133, and 155 to 167 (WFFE…QMAA).

It belongs to the NmrA-type oxidoreductase family.

The protein operates within secondary metabolite biosynthesis. In terms of biological role, nmrA-like family domain-containing oxidoreductase; part of the him gene cluster that mediates the biosynthesis of himeic acid A, a ubiquitin-activating enzyme (E1) inhibitor. First, himA, together with the trans-enoyl reductase himH, catalyzes the formation of apolyketide chain, which is then condensed with leucine by the NRPS activity of himA. Dieckmann cyclization and release from himA gives a tetramic acid intermediate as the product of himA PKS-NRPS. HimG then catalyzes alpha-oxidation of the tetramic acid ring, with a subsequent rearrangement to yield apyrone intermediate. Two terminal methyl groups of polyketide and amide side chains are oxidized to carboxylic acids by himC cytochrome P450 monooxygenase to form himeic acid A. Himeic acid A is further converted to himeic acid B and C during culture growth. No gene responsible for pyrone to pyridone conversion was found in the him gene cluster and himeic acid A is non-enzymatically converted to himeic acid C by the incorporation of an ammonium nitrogen atom in a pH5 buffer, and to himeic acid B at a conversion ratio of 50% during incubation in MeOH for 5 days. This Aspergillus japonicus protein is NmrA-like family domain-containing oxidoreductase himF.